Here is a 73-residue protein sequence, read N- to C-terminus: Translation initiation factor IF-1 (73 aa).

In terms of domain architecture, S1-like spans 1 to 72 (MSKDDLIQFT…TKGRVILRHQ (72 aa)).

It belongs to the IF-1 family. As to quaternary structure, component of the 30S ribosomal translation pre-initiation complex which assembles on the 30S ribosome in the order IF-2 and IF-3, IF-1 and N-formylmethionyl-tRNA(fMet); mRNA recruitment can occur at any time during PIC assembly.

The protein localises to the cytoplasm. One of the essential components for the initiation of protein synthesis. Stabilizes the binding of IF-2 and IF-3 on the 30S subunit to which N-formylmethionyl-tRNA(fMet) subsequently binds. Helps modulate mRNA selection, yielding the 30S pre-initiation complex (PIC). Upon addition of the 50S ribosomal subunit IF-1, IF-2 and IF-3 are released leaving the mature 70S translation initiation complex. The chain is Translation initiation factor IF-1 from Rickettsia bellii (strain OSU 85-389).